The sequence spans 130 residues: Glycine cleavage system H protein (130 aa).

Residues 24–106 form the Lipoyl-binding domain; the sequence is TLTIGITDHA…YGEGWIMRIR (83 aa). K65 carries the N6-lipoyllysine modification. Residues 111–130 are disordered; sequence DDLEQLLDPEDYQDLVADEE.

The protein belongs to the GcvH family. The glycine cleavage system is composed of four proteins: P, T, L and H. The cofactor is (R)-lipoate.

Functionally, the glycine cleavage system catalyzes the degradation of glycine. The H protein shuttles the methylamine group of glycine from the P protein to the T protein. The chain is Glycine cleavage system H protein from Alkalilimnicola ehrlichii (strain ATCC BAA-1101 / DSM 17681 / MLHE-1).